Reading from the N-terminus, the 504-residue chain is D-alanine--D-alanyl carrier protein ligase (504 aa).

152–153 is an ATP binding site; that stretch reads TS. Residue Asp-197 coordinates D-alanine. Position 292–297 (292–297) interacts with ATP; it reads NTYGPT. Position 301 (Val-301) interacts with D-alanine. ATP is bound by residues Asp-383, 394–397, and Lys-492; that span reads YNGR. Residue Lys-492 coordinates D-alanine.

It belongs to the ATP-dependent AMP-binding enzyme family. DltA subfamily.

Its subcellular location is the cytoplasm. It catalyses the reaction holo-[D-alanyl-carrier protein] + D-alanine + ATP = D-alanyl-[D-alanyl-carrier protein] + AMP + diphosphate. Its pathway is cell wall biogenesis; lipoteichoic acid biosynthesis. In terms of biological role, catalyzes the first step in the D-alanylation of lipoteichoic acid (LTA), the activation of D-alanine and its transfer onto the D-alanyl carrier protein (Dcp) DltC. In an ATP-dependent two-step reaction, forms a high energy D-alanyl-AMP intermediate, followed by transfer of the D-alanyl residue as a thiol ester to the phosphopantheinyl prosthetic group of the Dcp. D-alanylation of LTA plays an important role in modulating the properties of the cell wall in Gram-positive bacteria, influencing the net charge of the cell wall. The sequence is that of D-alanine--D-alanyl carrier protein ligase from Bacillus cereus (strain G9842).